Here is a 2058-residue protein sequence, read N- to C-terminus: MDNFFTEGTRVWLRENGQHFPSTVNSCAEGIVVFRTDYGQVFTYKQSTITHQKVTAMHPTNEEGVDDMASLTELHGGSIMYNLFQRYKRNQIYTYIGSILASVNPYQPIAGLYEPATMEQYSRRHLGELPPHIFAIANECYRCLWKRHDNQCILISGESGAGKTESTKLILKFLSVISQQSLELSLKEKTSCVERAILESSPIMEAFGNAKTVYNNNSSRFGKFVQLNICQKGNIQGGRIVDYLLEKNRVVRQNPGERNYHIFYALLAGLEHEEREEFYLSTPENYHYLNQSGCVEDKTISDQESFREVITAMDVMQFSKEEVREVSRLLAGILHLGNIEFITAGGAQVSFKTALGRSAELLGLDPTQLTDALTQRSMFLRGEEILTPLNVQQAVDSRDSLAMALYACCFEWVIKKINSRIKGNEDFKSIGILDIFGFENFEVNHFEQFNINYANEKLQEYFNKHIFSLEQLEYSREGLVWEDIDWIDNGECLDLIEKKLGLLALINEESHFPQATDSTLLEKLHSQHANNHFYVKPRVAVNNFGVKHYAGEVQYDVRGILEKNRDTFRDDLLNLLRESRFDFIYDLFEHVSSRNNQDTLKCGSKHRRPTVSSQFKDSLHSLMATLSSSNPFFVRCIKPNMQKMPDQFDQAVVLNQLRYSGMLETVRIRKAGYAVRRPFQDFYKRYKVLMRNLALPEDVRGKCTSLLQLYDASNSEWQLGKTKVFLRESLEQKLEKRREEEVSHAAMVIRAHVLGFLARKQYRKVLYCVVIIQKNYRAFLLRRRFLHLKKAAIVFQKQLRGQIARRVYRQLLAEKREQEEKKKQEEEEKKKREEEERERERERREAELRAQQEEETRKQQELEALQKSQKEAELTRELEKQKENKQVEEILRLEKEIEDLQRMKEQQELSLTEASLQKLQERRDQELRRLEEEACRAAQEFLESLNFDEIDECVRNIERSLSVGSEFSSELAESACEEKPNFNFSQPYPEEEVDEGFEADDDAFKDSPNPSEHGHSDQRTSGIRTSDDSSEEDPYMNDTVVPTSPSADSTVLLAPSVQDSGSLHNSSSGESTYCMPQNAGDLPSPDGDYDYDQDDYEDGAITSGSSVTFSNSYGSQWSPDYRCSVGTYNSSGAYRFSSEGAQSSFEDSEEDFDSRFDTDDELSYRRDSVYSCVTLPYFHSFLYMKGGLMNSWKRRWCVLKDETFLWFRSKQEALKQGWLHKKGGGSSTLSRRNWKKRWFVLRQSKLMYFENDSEEKLKGTVEVRTAKEIIDNTTKENGIDIIMADRTFHLIAESPEDASQWFSVLSQVHASTDQEIQEMHDEQANPQNAVGTLDVGLIDSVCASDSPDRPNSFVIITANRVLHCNADTPEEMHHWITLLQRSKGDTRVEGQEFIVRGWLHKEVKNSPKMSSLKLKKRWFVLTHNSLDYYKSSEKNALKLGTLVLNSLCSVVPPDEKIFKETGYWNVTVYGRKHCYRLYTKLLNEATRWSSAIQNVTDTKAPIDTPTQQLIQDIKENCLNSDVVEQIYKRNPILRYTHHPLHSPLLPLPYGDINLNLLKDKGYTTLQDEAIKIFNSLQQLESMSDPIPIIQGILQTGHDLRPLRDELYCQLIKQTNKVPHPGSVGNLYSWQILTCLSCTFLPSRGILKYLKFHLKRIREQFPGSEMEKYALFTYESLKKTKCREFVPSRDEIEALIHRQEMTSTVYCHGGGSCKITINSHTTAGEVVEKLIRGLAMEDSRNMFALFEYNGHVDKAIESRTVVADVLAKFEKLAATSEVGDLPWKFYFKLYCFLDTDNVPKDSVEFAFMFEQAHEAVIHGHHPAPEENLQVLAALRLQYLQGDYTLHAAIPPLEEVYSLQRLKARISQSTKTFTPCERLEKRRTSFLEGTLRRSFRTGSVVRQKVEEEQMLDMWIKEEVSSARASIIDKWRKFQGMNQEQAMAKYMALIKEWPGYGSTLFDVECKEGGFPQELWLGVSADAVSVYKRGEGRPLEVFQYEHILSFGAPLANTYKIVVDERELLFETSEVVDVAKLMKAYISMIVKKRYSTTRSASSQGSSR.

Position 1 is an N-acetylmethionine (M1). Residues 63–739 enclose the Myosin motor domain; sequence EGVDDMASLT…LEQKLEKRRE (677 aa). Residues N104, Y113, 160–165, and N215 contribute to the ATP site; that span reads GAGKTE. The tract at residues 619 to 641 is actin-binding; sequence LHSLMATLSSSNPFFVRCIKPNM. 3 IQ domains span residues 742–763, 764–787, and 788–817; these read VSHA…KQYR, KVLY…RFLH, and LKKA…EKRE. The segment at 814-883 is SAH; the sequence is EKREQEEKKK…LTRELEKQKE (70 aa). Disordered regions lie at residues 819–840 and 847–866; these read EEKK…RERE and ELRA…EALQ. Basic and acidic residues predominate over residues 847-861; sequence ELRAQQEEETRKQQE. The stretch at 884–934 forms a coiled coil; that stretch reads NKQVEEILRLEKEIEDLQRMKEQQELSLTEASLQKLQERRDQELRRLEEEA. Phosphoserine is present on residues S962, S965, and S968. Positions 964-1090 are disordered; that stretch reads GSEFSSELAE…DLPSPDGDYD (127 aa). The segment covering 989–1003 has biased composition (acidic residues); that stretch reads PEEEVDEGFEADDDA. Residues 1040–1049 are compositionally biased toward polar residues; that stretch reads VVPTSPSADS. Over residues 1060–1071 the composition is skewed to low complexity; it reads SGSLHNSSSGES. A Phosphothreonine modification is found at T1158. 2 consecutive PH domains span residues 1212–1310 and 1392–1497; these read EALK…QVHA and EFIV…NVTD. The MyTH4 domain occupies 1547–1695; that stretch reads LPYGDINLNL…PSRDEIEALI (149 aa). In terms of domain architecture, FERM spans 1700-2044; that stretch reads MTSTVYCHGG…AYISMIVKKR (345 aa).

The protein belongs to the TRAFAC class myosin-kinesin ATPase superfamily. Myosin family. As to quaternary structure, monomer, when in an inactive conformation in the cytosol. Homodimer in its active, membrane-bound conformation; antiparallel coiled coil-mediated dimer formation. Interacts strongly with CALM3 and weakly with CALM, the CALM3 interaction is essential for function in filopodial extension and motility. Interacts with ECPAS. Interacts with NEO1. Interacts with ITGB1 and ITGB3. Interacts with VASP. Interacts with DCC and ITGB5; the presence of DCC inhibits ITGB5 binding. Interacts with tubulin; ITGB5 or DCC binding inhibits tubulin binding. In terms of processing, the initiator methionine for isoform Headless is removed. As to expression, ubiquitous.

The protein resides in the cytoplasm. Its subcellular location is the cytosol. It is found in the cell projection. It localises to the lamellipodium. The protein localises to the ruffle. The protein resides in the cytoskeleton. Its subcellular location is the filopodium tip. It is found in the cell cortex. It localises to the filopodium membrane. Myosins are actin-based motor molecules with ATPase activity. Unconventional myosins serve in intracellular movements. MYO10 binds to actin filaments and actin bundles and functions as a plus end-directed motor. Moves with higher velocity and takes larger steps on actin bundles than on single actin filaments. The tail domain binds to membranous compartments containing phosphatidylinositol 3,4,5-trisphosphate or integrins, and mediates cargo transport along actin filaments. Regulates cell shape, cell spreading and cell adhesion. Stimulates the formation and elongation of filopodia. In hippocampal neurons it induces the formation of dendritic filopodia by trafficking the actin-remodeling protein VASP to the tips of filopodia, where it promotes actin elongation. Plays a role in formation of the podosome belt in osteoclasts. Its function is as follows. Functions as a dominant-negative regulator of isoform 1, suppressing its filopodia-inducing and axon outgrowth-promoting activities. In hippocampal neurons, it increases VASP retention in spine heads to induce spine formation and spine head expansion. The chain is Unconventional myosin-X (MYO10) from Homo sapiens (Human).